We begin with the raw amino-acid sequence, 168 residues long: Putative gustatory receptor clone PTE03 (168 aa).

The Extracellular portion of the chain corresponds to Thr-1–Gln-25. Cys-22 and Cys-104 are disulfide-bonded. A helical transmembrane segment spans residues Leu-26–Tyr-45. The Cytoplasmic portion of the chain corresponds to Asp-46 to Leu-67. Residues Val-68–Ile-88 form a helical membrane-spanning segment. Residues Leu-89–Asn-121 lie on the Extracellular side of the membrane. The chain crosses the membrane as a helical span at residues Ile-122–Tyr-143. Topologically, residues Phe-144–Thr-165 are cytoplasmic. Residues Cys-166–Ser-168 form a helical membrane-spanning segment.

This sequence belongs to the G-protein coupled receptor 1 family. As to expression, tongue specific.

The protein resides in the cell membrane. Functionally, possible taste receptor. The sequence is that of Putative gustatory receptor clone PTE03 (Olr1145) from Rattus norvegicus (Rat).